A 340-amino-acid chain; its full sequence is Coproporphyrin III ferrochelatase (340 aa).

2 residues coordinate Fe-coproporphyrin III: serine 52 and tyrosine 116. The Fe(2+) site is built by histidine 172 and glutamate 255.

Belongs to the ferrochelatase family.

It localises to the cytoplasm. The catalysed reaction is Fe-coproporphyrin III + 2 H(+) = coproporphyrin III + Fe(2+). It participates in porphyrin-containing compound metabolism; protoheme biosynthesis. Involved in coproporphyrin-dependent heme b biosynthesis. Catalyzes the insertion of ferrous iron into coproporphyrin III to form Fe-coproporphyrin III. The protein is Coproporphyrin III ferrochelatase of Mycobacterium ulcerans (strain Agy99).